Consider the following 506-residue polypeptide: Apolipoprotein N-acyltransferase (506 aa).

The next 6 helical transmembrane spans lie at 24–44 (LALA…MFYL), 58–78 (GWCY…VSIH), 85–105 (ALLA…FFAL), 125–145 (LAFA…LTGF), 162–182 (LAPV…AALL), and 192–212 (KSFL…GLAL). The region spanning 230 to 470 (MQGNIEQSMK…RGVLYGEVVP (241 aa)) is the CN hydrolase domain. Glutamate 269 acts as the Proton acceptor in catalysis. Lysine 330 is a catalytic residue. Cysteine 382 serves as the catalytic Nucleophile. The chain crosses the membrane as a helical span at residues 482–502 (SWPLAIVCLLLFGWALLAARI).

It belongs to the CN hydrolase family. Apolipoprotein N-acyltransferase subfamily.

The protein resides in the cell inner membrane. It catalyses the reaction N-terminal S-1,2-diacyl-sn-glyceryl-L-cysteinyl-[lipoprotein] + a glycerophospholipid = N-acyl-S-1,2-diacyl-sn-glyceryl-L-cysteinyl-[lipoprotein] + a 2-acyl-sn-glycero-3-phospholipid + H(+). It participates in protein modification; lipoprotein biosynthesis (N-acyl transfer). Functionally, catalyzes the phospholipid dependent N-acylation of the N-terminal cysteine of apolipoprotein, the last step in lipoprotein maturation. The polypeptide is Apolipoprotein N-acyltransferase (Pseudomonas syringae pv. tomato (strain ATCC BAA-871 / DC3000)).